The chain runs to 209 residues: dITP/XTP pyrophosphatase (209 aa).

Residue 22–27 coordinates substrate; that stretch reads SHNQGK. Asp83 acts as the Proton acceptor in catalysis. Asp83 contacts Mg(2+). Substrate is bound by residues Ser84, 167 to 170, Lys190, and 195 to 196; these read FGYD and HR.

The protein belongs to the HAM1 NTPase family. As to quaternary structure, homodimer. Mg(2+) serves as cofactor.

It catalyses the reaction XTP + H2O = XMP + diphosphate + H(+). It carries out the reaction dITP + H2O = dIMP + diphosphate + H(+). The enzyme catalyses ITP + H2O = IMP + diphosphate + H(+). In terms of biological role, pyrophosphatase that catalyzes the hydrolysis of nucleoside triphosphates to their monophosphate derivatives, with a high preference for the non-canonical purine nucleotides XTP (xanthosine triphosphate), dITP (deoxyinosine triphosphate) and ITP. Seems to function as a house-cleaning enzyme that removes non-canonical purine nucleotides from the nucleotide pool, thus preventing their incorporation into DNA/RNA and avoiding chromosomal lesions. This is dITP/XTP pyrophosphatase from Zymomonas mobilis subsp. mobilis (strain ATCC 31821 / ZM4 / CP4).